The primary structure comprises 283 residues: CUE domain-containing protein 2 (283 aa).

Over residues 87 to 109 (LSGARNKENVQPQSSEVQGQVSI) the composition is skewed to polar residues. A disordered region spans residues 87 to 139 (LSGARNKENVQPQSSEVQGQVSISPEPLQRPEKLKEETMSSAGDTQDEAAGPE). Ser110 is modified (phosphoserine). A compositionally biased stretch (basic and acidic residues) spans 115–124 (QRPEKLKEET). The CUE domain maps to 141 to 184 (ELLPGVDVLLEVFPTCSVEQAQWVLAKARGDLEEAVQMLVEGKQ).

The protein belongs to the CUEDC2 family. As to quaternary structure, interacts with PGR and ESR1.

It is found in the cytoplasm. The protein resides in the nucleus. Its function is as follows. Controls PGR and ESR1 protein levels through their targeting for ubiquitination and subsequent proteasomal degradation. This Bos taurus (Bovine) protein is CUE domain-containing protein 2 (CUEDC2).